Here is a 205-residue protein sequence, read N- to C-terminus: Urease accessory protein UreG (205 aa).

Position 14–21 (14–21 (GPVGSGKT)) interacts with GTP.

The protein belongs to the SIMIBI class G3E GTPase family. UreG subfamily. In terms of assembly, homodimer. UreD, UreF and UreG form a complex that acts as a GTP-hydrolysis-dependent molecular chaperone, activating the urease apoprotein by helping to assemble the nickel containing metallocenter of UreC. The UreE protein probably delivers the nickel.

The protein resides in the cytoplasm. In terms of biological role, facilitates the functional incorporation of the urease nickel metallocenter. This process requires GTP hydrolysis, probably effectuated by UreG. This Escherichia coli protein is Urease accessory protein UreG.